Reading from the N-terminus, the 507-residue chain is Cytochrome P450 4X1 (507 aa).

Residues 14-34 (LHLALVFCLALVLMQAMKLYL) form a helical membrane-spanning segment. Cys452 is a heme binding site.

It belongs to the cytochrome P450 family. The cofactor is heme. Expressed in brain and aorta. In the brain, expressed in the Purkinje cells of the cerebellum, pyramidal neurons in the dentate gyrus of the hippocampus, cortical forebrain neurons and those of brain stem nuclei (at protein level). In addition to neurons, also expressed in cerebral vascular endothelial cells (at protein level). Also expressed in epithelial cells of the choroid plexus (at protein level). Hardly detectable in heart, lung, kidney and spleen.

The protein localises to the endoplasmic reticulum membrane. The protein resides in the microsome membrane. The catalysed reaction is N-(5Z,8Z,11Z,14Z-eicosatetraenoyl)-ethanolamine + reduced [NADPH--hemoprotein reductase] + O2 = N-(14,15-epoxy-5Z,8Z,11Z-eicosatrienoyl)-ethanolamine + oxidized [NADPH--hemoprotein reductase] + H2O + H(+). A cytochrome P450 monooxygenase that selectively catalyzes the epoxidation of the last double bond of the arachidonoyl moiety of anandamide, potentially modulating endocannabinoid signaling. Has no hydroxylase activity toward various fatty acids, steroids and prostaglandins. Mechanistically, uses molecular oxygen inserting one oxygen atom into a substrate, and reducing the second into a water molecule, with two electrons provided by NADPH via cytochrome P450 reductase (CPR; NADPH-ferrihemoprotein reductase). This is Cytochrome P450 4X1 from Mus musculus (Mouse).